The primary structure comprises 78 residues: U5-ctenitoxin-Pk1a (78 aa).

Cystine bridges form between Cys-6–Cys-23, Cys-13–Cys-29, Cys-20–Cys-52, Cys-22–Cys-40, Cys-31–Cys-38, Cys-58–Cys-73, and Cys-69–Cys-77.

In terms of tissue distribution, expressed by the venom gland.

The protein localises to the secreted. Its function is as follows. Lethal neurotoxin. Causes spastic paralysis and death in mice in 4-6 minutes after intracerebroventricular injection at dose levels of 1.5 ug per mouse. This Phoneutria keyserlingi (Brazilian wandering spider) protein is U5-ctenitoxin-Pk1a.